A 183-amino-acid polypeptide reads, in one-letter code: Translation initiation factor IF-3 (183 aa).

Belongs to the IF-3 family. In terms of assembly, monomer.

It localises to the cytoplasm. In terms of biological role, IF-3 binds to the 30S ribosomal subunit and shifts the equilibrium between 70S ribosomes and their 50S and 30S subunits in favor of the free subunits, thus enhancing the availability of 30S subunits on which protein synthesis initiation begins. The polypeptide is Translation initiation factor IF-3 (Pseudomonas putida (strain W619)).